The sequence spans 1160 residues: Carbamoyl phosphate synthase arginine-specific large chain, mitochondrial (1160 aa).

A carboxyphosphate synthetic domain region spans residues 81-478; that stretch reads AEHEKVKKVV…SLQKALRQVD (398 aa). Residues R208, R248, G254, G255, K285, L287, E292, G318, I319, H320, Q361, and E375 each contribute to the ATP site. Positions 212 to 404 constitute an ATP-grasp 1 domain; it reads AKALNEINIP…LAYTAAKIAL (193 aa). Residues Q361, E375, and N377 each coordinate Mg(2+). Mn(2+) is bound by residues Q361, E375, and N377. The segment at 479–623 is oligomerization domain; that stretch reads PSFLGFMAMP…YTSYNASSHD (145 aa). Residues 624-1012 are carbamoyl phosphate synthetic domain; that stretch reads IDFNEHGTMV…AYWAALQSTQ (389 aa). Residues 748–946 enclose the ATP-grasp 2 domain; it reads SQILDKIGVD…FIDVATRSII (199 aa). 10 residues coordinate ATP: R784, K823, I825, E830, G855, V856, H857, S858, Q898, and E917. The Mg(2+) site is built by Q898, E917, and N919. Residues Q898, E917, and N919 each contribute to the Mn(2+) site. The interval 1013 to 1144 is allosteric domain; the sequence is NFKIPLPGQG…PSVLSEKKEM (132 aa). Residues 1014–1160 form the MGS-like domain; the sequence is FKIPLPGQGI…WSEWIGSHDL (147 aa).

It belongs to the CarB family. As to quaternary structure, heterodimer composed of 2 chains; the small (or glutamine) chain promotes the hydrolysis of glutamine to ammonia, which is used by the large (or ammonia) chain to synthesize carbamoyl phosphate. Requires Mg(2+) as cofactor. Mn(2+) serves as cofactor.

It localises to the mitochondrion. It carries out the reaction hydrogencarbonate + L-glutamine + 2 ATP + H2O = carbamoyl phosphate + L-glutamate + 2 ADP + phosphate + 2 H(+). It catalyses the reaction hydrogencarbonate + NH4(+) + 2 ATP = carbamoyl phosphate + 2 ADP + phosphate + 2 H(+). It functions in the pathway amino-acid biosynthesis; L-arginine biosynthesis; carbamoyl phosphate from bicarbonate: step 1/1. Its function is as follows. Large subunit of the arginine-specific carbamoyl phosphate synthase (CPSase). CPSase catalyzes the formation of carbamoyl phosphate from the ammonia moiety of glutamine, hydrogencarbonate, and phosphate donated by ATP, the first step of the arginine biosynthetic pathway. The large subunit (synthetase) binds the substrates ammonia (free or transferred from glutamine from the small subunit), hydrogencarbonate and ATP and carries out an ATP-coupled ligase reaction, activating hydrogencarbonate by forming carboxy phosphate which reacts with ammonia to form carbamoyl phosphate. The sequence is that of Carbamoyl phosphate synthase arginine-specific large chain, mitochondrial (arg4) from Schizosaccharomyces pombe (strain 972 / ATCC 24843) (Fission yeast).